The chain runs to 359 residues: Lipopolysaccharide 1,6-galactosyltransferase (359 aa).

UDP-binding residues include Q242 and E274.

The protein belongs to the glycosyltransferase group 1 family. Glycosyltransferase 4 subfamily.

The enzyme catalyses alpha-D-Glc-(1-&gt;3)-[L-alpha-D-Hep-(1-&gt;7)]-4-O-PO3(2-)-L-alpha-D-Hep-(1-&gt;3)-4-O-PO3(2-)-L-alpha-D-Hep-(1-&gt;5)-[alpha-Kdo-(2-&gt;4)]-alpha-Kdo-(2-&gt;6)-lipid A + UDP-alpha-D-galactose = alpha-D-Gal-(1-&gt;6)-alpha-D-Glc-(1-&gt;3)-[L-alpha-D-Hep-(1-&gt;7)]-4-O-PO3(2-)-L-alpha-D-Hep-(1-&gt;3)-4-O-PO3(2-)-L-alpha-D-Hep-(1-&gt;5)-[alpha-Kdo-(2-&gt;4)]-alpha-Kdo-(2-&gt;6)-lipid A + UDP + H(+). It functions in the pathway bacterial outer membrane biogenesis; LPS core biosynthesis. In terms of biological role, galactosyltransferase involved in the biosynthesis of the core oligosaccharide region of lipopolysaccharide (LPS). Catalyzes the addition of galactose from UDP-galactose to the first glucose residue of the LPS outer core. Cannot use other sugar donors, such as UDP-glucose, UDP-glucuronic acid, UDP-galacuronic acid, GDP-mannose, ADP-glucose and GDP-glucose. In the absence of a lipid acceptor, can hydrolyze UDP-galactose to UDP and galactose. The polypeptide is Lipopolysaccharide 1,6-galactosyltransferase (Escherichia coli (strain K12)).